A 345-amino-acid chain; its full sequence is NADH-ubiquinone oxidoreductase chain 2 (345 aa).

Helical transmembrane passes span 1-21, 25-45, 56-76, 92-114, 149-171, 178-198, 200-220, 241-261, 274-294, and 324-344; these read MNPITLAIIYFTIFLGPVITM, NLMLMWVGLEFSLLAIIPMLI, ATKYFVTQATASMIILLAIVL, GLILNMTLMALSMKLGLAPFHFW, LNSTIILMLAITSIFMGAWGGLN, IMAYSSIAHMGWMLAILPYNP, LTLLNLMIYIILTAPMFMALM, LTMISLMLLSLGGLPPLTGFL, NCLIMATLMAMMALLNLFFYT, and LMFSTLAIMSTMTLPLAPQLI.

The protein belongs to the complex I subunit 2 family. Core subunit of respiratory chain NADH dehydrogenase (Complex I) which is composed of 45 different subunits. Interacts with TMEM242.

It is found in the mitochondrion inner membrane. The enzyme catalyses a ubiquinone + NADH + 5 H(+)(in) = a ubiquinol + NAD(+) + 4 H(+)(out). In terms of biological role, core subunit of the mitochondrial membrane respiratory chain NADH dehydrogenase (Complex I) which catalyzes electron transfer from NADH through the respiratory chain, using ubiquinone as an electron acceptor. Essential for the catalytic activity and assembly of complex I. In Mus musculus (Mouse), this protein is NADH-ubiquinone oxidoreductase chain 2.